The chain runs to 203 residues: LexA repressor (203 aa).

The segment at residues Val-30–Lys-50 is a DNA-binding region (H-T-H motif). Residues Ser-127 and Lys-164 each act as for autocatalytic cleavage activity in the active site.

This sequence belongs to the peptidase S24 family. In terms of assembly, homodimer.

The catalysed reaction is Hydrolysis of Ala-|-Gly bond in repressor LexA.. Represses a number of genes involved in the response to DNA damage (SOS response), including recA and lexA. In the presence of single-stranded DNA, RecA interacts with LexA causing an autocatalytic cleavage which disrupts the DNA-binding part of LexA, leading to derepression of the SOS regulon and eventually DNA repair. The sequence is that of LexA repressor from Clostridium perfringens (strain ATCC 13124 / DSM 756 / JCM 1290 / NCIMB 6125 / NCTC 8237 / Type A).